Consider the following 97-residue polypeptide: Sperm protein associated with the nucleus on the X chromosome A (97 aa).

The segment at 1–49 (MDKQSSAGGVKRSVPCDSNEANEMMPETPTGDSDPQPAPKKMKTSESST) is disordered. The Nuclear localization signal motif lies at 37–45 (PAPKKMKTS).

Belongs to the SPAN-X family. In terms of tissue distribution, detected in testis and sperm.

Its subcellular location is the cytoplasm. It localises to the nucleus. The protein is Sperm protein associated with the nucleus on the X chromosome A of Homo sapiens (Human).